We begin with the raw amino-acid sequence, 375 residues long: Methylthioribose-1-phosphate isomerase (375 aa).

Asp257 serves as the catalytic Proton donor.

It belongs to the eIF-2B alpha/beta/delta subunits family. MtnA subfamily.

It localises to the cytoplasm. Its subcellular location is the nucleus. The catalysed reaction is 5-(methylsulfanyl)-alpha-D-ribose 1-phosphate = 5-(methylsulfanyl)-D-ribulose 1-phosphate. The protein operates within amino-acid biosynthesis; L-methionine biosynthesis via salvage pathway; L-methionine from S-methyl-5-thio-alpha-D-ribose 1-phosphate: step 1/6. Its function is as follows. Catalyzes the interconversion of methylthioribose-1-phosphate (MTR-1-P) into methylthioribulose-1-phosphate (MTRu-1-P). This chain is Methylthioribose-1-phosphate isomerase, found in Leishmania infantum.